Reading from the N-terminus, the 218-residue chain is Putative tRNA methyltransferase MG248 (218 aa).

Belongs to the TrmK family.

The protein localises to the cytoplasm. In Mycoplasma genitalium (strain ATCC 33530 / DSM 19775 / NCTC 10195 / G37) (Mycoplasmoides genitalium), this protein is Putative tRNA methyltransferase MG248.